The sequence spans 327 residues: Aldo-keto reductase family 1 member A1 (327 aa).

NADP(+) contacts are provided by residues 13–22 (GQKIPLIGLG), T23, W24, and D47. The Proton donor role is filled by Y52. S164, N165, S213, L215, S217, K265, S266, V267, T268, R271, Q274, and N275 together coordinate NADP(+).

This sequence belongs to the aldo/keto reductase family.

It is found in the cytoplasm. The protein resides in the cytosol. It localises to the apical cell membrane. The catalysed reaction is a primary alcohol + NADP(+) = an aldehyde + NADPH + H(+). The enzyme catalyses S-nitroso-CoA + NADPH + H(+) = sulfinamide-CoA + NADP(+). It catalyses the reaction S-nitrosoglutathione + NADPH + H(+) = S-(hydroxysulfenamide)glutathione + NADP(+). Functionally, catalyzes the NADPH-dependent reduction of a wide variety of carbonyl-containing compounds to their corresponding alcohols. Displays enzymatic activity towards endogenous metabolites such as aromatic and aliphatic aldehydes, ketones, monosaccharides and bile acids. Acts as an aldehyde-detoxification enzyme. Also acts as an inhibitor of protein S-nitrosylation by mediating degradation of S-nitroso-coenzyme A (S-nitroso-CoA), a cofactor required to S-nitrosylate proteins. Also acts as a S-nitroso-glutathione reductase by catalyzing the NADPH-dependent reduction of S-nitrosoglutathione. Displays no reductase activity towards retinoids. The chain is Aldo-keto reductase family 1 member A1 (akr1a1) from Xenopus tropicalis (Western clawed frog).